Here is a 297-residue protein sequence, read N- to C-terminus: Homoserine kinase (297 aa).

Residue 82 to 92 (PLTRGLGSSAS) coordinates ATP.

It belongs to the GHMP kinase family. Homoserine kinase subfamily.

The protein resides in the cytoplasm. The enzyme catalyses L-homoserine + ATP = O-phospho-L-homoserine + ADP + H(+). It participates in amino-acid biosynthesis; L-threonine biosynthesis; L-threonine from L-aspartate: step 4/5. In terms of biological role, catalyzes the ATP-dependent phosphorylation of L-homoserine to L-homoserine phosphate. The protein is Homoserine kinase of Bacillus cereus (strain ZK / E33L).